A 354-amino-acid polypeptide reads, in one-letter code: MKISNICFSYQPPGESHQEVMERFIRLGVASEELNFDGFYTLEHHFTEFGITGNLYIACANILGRTKRIQVGTMGIVLPTEHPARHVESLLVLDQLSKGRFNYGTVRGLYHKDFRVFGTSQEDSRKTAENFYSMILDASKTGVLHTDGEVVEFPDVNVYPEAYSKKQPTCMTAESSETITYLAERGLPMVLSWIIPVSEKVSQMELYNEVAAEHGHDINNIEHILTFICSVNEDGEKADSVCRNFLENWYDSYKNATNIFNDSNQTRGYDYLKAQWREWVMKGLADPRRRLDYSNELNPVGTPERCIEIIQSNIDATGIKHITVGFEANGSEQEIRESMELFMEKVAPHLKDPQ.

This sequence belongs to the bacterial luciferase oxidoreductase family. As to quaternary structure, heterodimer of an alpha and a beta chain.

The enzyme catalyses a long-chain fatty aldehyde + FMNH2 + O2 = a long-chain fatty acid + hnu + FMN + H2O + 2 H(+). Functionally, light-emitting reaction in luminous bacteria. The protein is Alkanal monooxygenase alpha chain (luxA) of Photobacterium leiognathi.